Reading from the N-terminus, the 418-residue chain is Serine protease inhibitor A3K (418 aa).

Positions 1 to 21 (MAFIVAMGMILMAGICPAVLC) are cleaved as a signal peptide. 4 N-linked (GlcNAc...) asparagine glycosylation sites follow: N39, N105, N185, and N270. An RCL region spans residues 369–394 (GTEAAAATGVIGGIRKAILPAVHFNR).

This sequence belongs to the serpin family. In terms of tissue distribution, expressed in liver and secreted in plasma.

It localises to the secreted. Functionally, contrapsin inhibits trypsin-like proteases. This is Serine protease inhibitor A3K (Serpina3k) from Mus musculus (Mouse).